A 438-amino-acid polypeptide reads, in one-letter code: MRDVHGSLKYFSSVAEDMNPSDVFQIIEGHTKLMRDSIPLIASENLTSLSVRRCYVSDLGHRYAEGRVGERFYEGCKYVDQIESMAIELTRKIFEAEHANVQPISGVVANLAAFFALTNVGDTIMSISVPCGGHISHDRVSAAGLRGLRVIHYPFNSEEMSVDVDETRKVAERERPKLFILGSSLILFRQPVKEIREIADEIGAYVMYDASHVLGLIAGKAFQNPLKEGADVMTGSTHKTFFGPQRAIIASRKELAEKVDRAVFPGVVSNHHLNTLAGYVVAAMEMLEFGEDYAKQVVRNAKALAEELYSLGYKVLGEKRGFTETHQVAVDVREFGGGERVAKVLENAGIILNKNLLPWDSLEKTANPSGIRIGVQEVTRIGMKEEEMRAIAEIMDAAIKEKKSVDELRNEVKELKERFNVIKYSFDESEAYHFPDLR.

Position 133-135 (133-135) interacts with (6S)-5,6,7,8-tetrahydrofolate; that stretch reads GHI. Lys239 is subject to N6-(pyridoxal phosphate)lysine.

This sequence belongs to the SHMT family. Homodimer. The cofactor is pyridoxal 5'-phosphate.

The protein localises to the cytoplasm. It catalyses the reaction 5,10-methylenetetrahydromethanopterin + glycine + H2O = 5,6,7,8-tetrahydromethanopterin + L-serine. It participates in amino-acid biosynthesis; glycine biosynthesis; glycine from L-serine: step 1/1. Functionally, catalyzes the reversible interconversion of serine and glycine with tetrahydromethanopterin (H4MPT) serving as the one-carbon carrier. Also exhibits a pteridine-independent aldolase activity toward beta-hydroxyamino acids, producing glycine and aldehydes, via a retro-aldol mechanism. This Archaeoglobus fulgidus (strain ATCC 49558 / DSM 4304 / JCM 9628 / NBRC 100126 / VC-16) protein is Serine hydroxymethyltransferase.